The following is a 466-amino-acid chain: MESSMNVREYSNISMIKGPLLMVQGVADSAYNELVEVEMPNGERRRGIVVDSQKGISIVQVFEGTRGISPVGTTVRFLGRGLEVKISEEMLGRIFNPLGDPLDNGPMVIKGEKRDINGEPLNPAIRDYPEEFIQTGISAIDGLNSLLRGQKLPIFSGSGLPANILAAQIAKQATVRGEESNFAVVFGAIGVRYDEALFFRKFFEETGAINRVALIMSLANEPPVMKTLTPKTALTLAEYLAFEQDMHVLAILIDMTNYCEALREISASKEEVPGRGGYPGYMYTDLAQTYERAGKVIGKKGSITQMPILTMPNDDITHPIPDLTGYITEGQITLDRSLYNKGIYPPINVLMSLSRLAKDGIGEGKTRDDHKDLSNQLFAAYAKAVDTRGLAAIIGEDSLSDTDKKYLMFGDAFERKFVSQGVNENRDIETTLDIGWEVLSILPERELTNVKVDYIKKYHPAYRGKK.

This sequence belongs to the ATPase alpha/beta chains family. As to quaternary structure, has multiple subunits with at least A(3), B(3), C, D, E, F, H, I and proteolipid K(x).

It is found in the cell membrane. Functionally, component of the A-type ATP synthase that produces ATP from ADP in the presence of a proton gradient across the membrane. The B chain is a regulatory subunit. This Metallosphaera sedula (strain ATCC 51363 / DSM 5348 / JCM 9185 / NBRC 15509 / TH2) protein is A-type ATP synthase subunit B.